We begin with the raw amino-acid sequence, 1106 residues long: Inversin (1106 aa).

ANK repeat units lie at residues 13 to 42 (SLAS…ELKD), 47 to 76 (FGRT…DVNR), 80 to 110 (SRRT…WMQK), 113 to 144 (EGMT…EVDT), 148 to 177 (NKQT…NIGI), 181 to 213 (EGKI…TESL), 220 to 250 (EGRT…NVTS), 254 to 285 (LFRT…TIPS), 288 to 317 (QGAT…VKDD), 321 to 350 (EGRT…DIDI), 356 to 385 (YAGT…QVDA), 389 to 418 (MKHT…RVDL), 422 to 451 (DGHS…NPNV), 455 to 484 (AGRT…DPNI), 488 to 517 (EGRT…FPNH), and 523 to 553 (ERYT…SIAA). The D-box 1 signature appears at 490 to 498 (RTALHWLCN). One can recognise an IQ 1 domain in the interval 555–584 (QDIAAFKIQAVYKGYKVRKAFQERKNLLMK). The span at 589-607 (RKDAAAKKREEESKRKEAS) shows a compositional bias: basic and acidic residues. Disordered regions lie at residues 589 to 615 (RKDA…MQNM), 636 to 688 (LQLS…ELQS), 746 to 782 (ANGT…GNRG), and 809 to 833 (AVPK…CSPA). Composition is skewed to polar residues over residues 636-645 (LQLSNKQTDL) and 653-666 (VSAS…NSRG). A compositionally biased stretch (basic residues) spans 812–822 (KSKRHQQKSRH). The short motif at 944–952 (RKELFRKKN) is the D-box 2 element. The IQ 2 domain occupies 951–980 (KNYAATVIQRTWRSYRLRQELSQLLSAKRQ).

Binds calmodulin via its IQ domains. Interacts with APC2.

It localises to the cytoplasm. Its subcellular location is the cytoskeleton. Required for normal renal development and establishment of left-right axis. Probably acts as a molecular switch between different Wnt signaling pathways. Inhibits the canonical Wnt pathway by targeting cytoplasmic disheveled for degradation by the ubiquitin-proteasome. This suggests that it is required in renal development to oppose the repression of terminal differentiation of tubular epithelial cells by Wnt signaling. This Gallus gallus (Chicken) protein is Inversin (INVS).